The sequence spans 191 residues: LAVLERLRENNEMTKQPSVIMLTAFGQEDVTKKAVDLGASYFILKPFDMENLVGHIRQVSGNGTQVTHRSSSIQNSVLRNKPPEPKRKNLDASITTIIHEIGVPAHIKGYLYLREAISMVYNDIELLGSITKVLYPDIAKKFNTTASRVERAIRHAIEVAWSRGNIDSISSLFGYTVSMSKAKPTNSEFIA.

In terms of domain architecture, Response regulatory spans 1 to 60; that stretch reads LAVLERLRENNEMTKQPSVIMLTAFGQEDVTKKAVDLGASYFILKPFDMENLVGHIRQVS. A compositionally biased stretch (polar residues) spans 64–78; sequence TQVTHRSSSIQNSVL. A disordered region spans residues 64-86; it reads TQVTHRSSSIQNSVLRNKPPEPK. The H-T-H motif DNA-binding region spans 136 to 155; sequence PDIAKKFNTTASRVERAIRH.

Ca(2+) is required as a cofactor. Post-translationally, phosphorylated by KinA and KinB.

The protein localises to the cytoplasm. Functionally, may play the central regulatory role in sporulation. It may be an element of the effector pathway responsible for the activation of sporulation genes in response to nutritional stress. Spo0A may act in concert with Spo0H (a sigma factor) to control the expression of some genes that are critical to the sporulation process. Repressor of abrB, activator of the spoIIa operon. Binds the DNA sequence 5'-TGNCGAA-3' (0A box). The polypeptide is Stage 0 sporulation protein A (spo0A) (Bacillus pumilus (Bacillus mesentericus)).